Here is a 268-residue protein sequence, read N- to C-terminus: Tryptophan synthase alpha chain (268 aa).

Residues glutamate 49 and aspartate 60 each act as proton acceptor in the active site.

Belongs to the TrpA family. Tetramer of two alpha and two beta chains.

The enzyme catalyses (1S,2R)-1-C-(indol-3-yl)glycerol 3-phosphate + L-serine = D-glyceraldehyde 3-phosphate + L-tryptophan + H2O. The protein operates within amino-acid biosynthesis; L-tryptophan biosynthesis; L-tryptophan from chorismate: step 5/5. Functionally, the alpha subunit is responsible for the aldol cleavage of indoleglycerol phosphate to indole and glyceraldehyde 3-phosphate. The sequence is that of Tryptophan synthase alpha chain from Escherichia coli O81 (strain ED1a).